Reading from the N-terminus, the 243-residue chain is Phosphate-specific transport system accessory protein PhoU (243 aa).

It belongs to the PhoU family. In terms of assembly, homodimer.

The protein resides in the cytoplasm. Functionally, part of the phosphate (Pho) regulon, which plays a key role in phosphate homeostasis. Encoded together with proteins of the phosphate-specific transport (Pst) system in the polycistronic pstSCAB-phoU operon. PhoU is essential for the repression of the Pho regulon at high phosphate conditions. In this role, it may bind, possibly as a chaperone, to PhoR, PhoB or a PhoR-PhoB complex to promote dephosphorylation of phospho-PhoB, or inhibit formation of the PhoR-PhoB transitory complex. The protein is Phosphate-specific transport system accessory protein PhoU of Serratia marcescens.